Reading from the N-terminus, the 1587-residue chain is MAFWLPQNIQRRLILYVLQQITLFSNVDITKLDVSLGSHSKFTFQDVDLNISEMNISGCEVNSGMLGKLMLGLTVSGDVHISGDNIDFMITMINEDDFNDMNSFSLAKSFYDLTSSIMQFKPDAHLKNEISGSGSDSPRIPDDYTNPSSAGGNPTTNTYDIIVDDTASSTTESDDSSPIDSIPTSRFNIMQQKVIATALAKLKITLQSVRIRINLGKRKDCNCLDVVVKRIDMSTSEGHVRNFDANGISIAYINNEPSVVPPNNMDMAESLYFSQADASSIYMSALSDANTDIKSLDASVFNSERYELLSINGMSFSFVGISSIDDFAISRIKINLGTLQVNIPFLLKVREDIILTMIFKLISPRHTDKVDVKNSPAYKRFQNELHSNDTNLFSNLAIEEILIGLSSNQKIILRAVDLESNEINGINLSVGDIDLVGLDMDWISETRPCFNASFGKSNTIIELANTIIRVSEHDLILFLKIYYEIMDFIDFVLSKWKILGVKQVSQLRNDEKFSLNVGSLVIEIPLDNSILEINIPNIEHDSLNQDLKLYEVNMTHIVESIKISSLKLKEVSIDLSSARKKMKCYNEHFSQYFVFTHYKVQITGIDSQINLKSLWIIGAVIEQFYIASPVQEYPEATNKNSVRFHDNNKRLLSTSLMINKRAILAKYIIELDDIKVCISGFDADQIRHCKFSLQRLLFLNQIDKGLLFNIFQPHVEIKFFSGSLNDIIRSTNIGVSGQPHLILCIFADKKIKVSIKDIMIFYQAKWLDSVQRNASLDQEKGQNVEYSELPEFSISIRDSAINFLPFRINPSLVILFESIIVTKSGNDALINMHSKVGRFYLTDNYDHLKTTQVMNKTICDSLIKSGYSQIGKFEGLSMTLNKKHKIVNCNGCLEKVILSVCSDSFHTLVQLCMDLKVPVTFPDDKKYQPVPSVAVDLFETIEENEFNLSNLDNKDIDKSIGSDSDSLHIVNSFLDEVEDFQFHEDYNSGTVWSHTTSDTHSSSDILPISLKEEYLDSRRTEVQKHSQSNDRNIISEIDFDIKNADIRLYDGYDWRYTRKNVSSAISELEEGLLSGIQRQEQTESELSRTTVFDSICIATKQKDLGNLKQIISEQVQGKHDHLNSDKVYLYPSKHYKSLIKANELIFKIKIYDSNSPRNEEFNNHAAKLFQITASISTYEVLDNLPTSTWNKFVTLLKKEAWPKSEPMLYFDFMLFKPINSLEATEATINIRSAPLRIHADQYMVDFLLRFFQFNDKRFELIDEYPEILFLQKFKSNTIKLRIDYKPNKTSSGMYSGKISDLINLFVLDESKVTLKGVVLHGINGFNELSEQLVKIWGNDVTSKQIFNILQGFAPVKSFIALGAGAQTFITVLLAEYKRDRSISRSVKKSGNIFIKTTTGDFIKLGAKLAVGTQALLENTEGILSGNATQNRTLADVSQTNKVLDLDSLLQQDQVLIGRNPKIRNKSPSAIIIDAADLEESGRPKVVSLYSEQPLDLHKGLEEAYHALEKHIQIAYNTIWQTNQELRGEESRSAKAAAVTIAKAAPVAVIRPMIGATEAIAKTLQGIYNQLDKSNIEEINDKYKKEDN.

The disordered stretch occupies residues 128–160 (NEISGSGSDSPRIPDDYTNPSSAGGNPTTNTYD). A compositionally biased stretch (polar residues) spans 145–159 (TNPSSAGGNPTTNTY).

It belongs to the ATG2 family.

The protein localises to the preautophagosomal structure membrane. The protein resides in the endoplasmic reticulum membrane. The enzyme catalyses a 1,2-diacyl-sn-glycero-3-phosphocholine(in) = a 1,2-diacyl-sn-glycero-3-phosphocholine(out). It carries out the reaction a 1,2-diacyl-sn-glycero-3-phospho-L-serine(in) = a 1,2-diacyl-sn-glycero-3-phospho-L-serine(out). The catalysed reaction is a 1,2-diacyl-sn-glycero-3-phosphoethanolamine(in) = a 1,2-diacyl-sn-glycero-3-phosphoethanolamine(out). In terms of biological role, lipid transfer protein required for autophagosome completion and peroxisome degradation. Tethers the edge of the isolation membrane (IM) to the endoplasmic reticulum (ER) and mediates direct lipid transfer from ER to IM for IM expansion. ATG2 binds to the ER exit site (ERES), which is the membrane source for autophagosome formation, using basic residues in its N-terminal region (NR) and to the expanding edge of the IM through its C-terminal region. The latter binding is assisted by an ATG18-PtdIns3P interaction. ATG2 then extracts phospholipids from the membrane source using its NR and transfers them to ATG9 to the IM through its predicted beta-sheet-rich structure for membrane expansion. The sequence is that of Autophagy-related protein 2 (ATG2) from Candida glabrata (strain ATCC 2001 / BCRC 20586 / JCM 3761 / NBRC 0622 / NRRL Y-65 / CBS 138) (Yeast).